The chain runs to 210 residues: Small ribosomal subunit protein uS3 (210 aa).

Residues 38–106 (IRAWLKKRLA…EVQINIVEIR (69 aa)) form the KH type-2 domain.

Belongs to the universal ribosomal protein uS3 family. As to quaternary structure, part of the 30S ribosomal subunit. Forms a tight complex with proteins S10 and S14.

Its function is as follows. Binds the lower part of the 30S subunit head. Binds mRNA in the 70S ribosome, positioning it for translation. The sequence is that of Small ribosomal subunit protein uS3 from Magnetococcus marinus (strain ATCC BAA-1437 / JCM 17883 / MC-1).